The sequence spans 487 residues: MAMETKSCQQLHIFFLPFMARGHSIPLTDIAKLFSSHGARCTIVTTPLNAPLFSKATQRGEIELVLIKFPSAEAGLPQDCESADLITTQDMLGKFVKATFLIEPHFEKILDEHRPHCLVADAFFTWATDVAAKFRIPRLYFHGTGFFALCASLSVMMYQPHSNLSSDSESFVIPNLPDEIKMTRSQLPVFPDESEFMKMLKASIEIEERSYGVIVNSFYELEPAYANHYRKVFGRKAWHIGPVSFCNKAIEDKAERGSIKSSTAEKHECLKWLDSKKPRSVVYVSFGSMVRFADSQLLEIATGLEASGQDFIWVVKKEKKEVEEWLPEGFEKRMEGKGLIIRDWAPQVLILEHEAIGAFVTHCGWNSILEAVSAGVPMITWPVFGEQFYNEKLVTEIHRIGVPVGSEKWALSFVDVNAETEGRVRREAIEEAVTRIMVGDEAVETRSRVKELGENARRAVEEGGSSFLDLSALVGELNDLAFGGLVE.

His23 acts as the Proton acceptor in catalysis. His23 is a binding site for an anthocyanidin. The active-site Charge relay is Asp121. Ala345, Gln347, His362, Trp365, Asn366, Ser367, and Glu370 together coordinate UDP-alpha-D-glucose. Gly385 is an an anthocyanidin binding site. UDP-alpha-D-glucose-binding residues include Glu386 and Gln387.

It belongs to the UDP-glycosyltransferase family. In terms of tissue distribution, strongly expressed in achenes and receptacles.

The catalysed reaction is a flavonol + UDP-alpha-D-glucose = a flavonol 3-O-beta-D-glucoside + UDP + H(+). Its function is as follows. Broad spectrum multifunctional glucosyltransferase. Catalyzes the formation of flavonol 3-O- and 4'-O-glucosides during fruit ripening. Accepted substrates include several flavonoids, hydroxycoumarins and beta-naphthols. Uses UDP-Glc as a sugar donor, but not UDP-Gal or UDP-GlcUA. May also be involved in detoxification of xenobiotics. The chain is UDP-glucose flavonoid 3-O-glucosyltransferase 7 from Fragaria ananassa (Strawberry).